We begin with the raw amino-acid sequence, 66 residues long: Light-harvesting protein B-800-850 alpha chain B (66 aa).

Residues M1–N11 are Cytoplasmic-facing. Residues P12–L35 form a helical membrane-spanning segment. H31 is an a bacteriochlorophyll binding site. The Periplasmic portion of the chain corresponds to S36–K66.

This sequence belongs to the antenna complex alpha subunit family. The core complex is formed by different alpha and beta chains, binding bacteriochlorophyll molecules, and arranged most probably in tetrameric structures disposed around the reaction center. The non-pigmented gamma chains may constitute additional components.

Its subcellular location is the cell inner membrane. Functionally, antenna complexes are light-harvesting systems, which transfer the excitation energy to the reaction centers. The polypeptide is Light-harvesting protein B-800-850 alpha chain B (pucAB) (Rhodopseudomonas palustris (strain ATCC BAA-98 / CGA009)).